A 318-amino-acid chain; its full sequence is Ribonuclease Z (318 aa).

The Zn(2+) site is built by H62, H64, D66, H67, H139, D210, and H268. D66 serves as the catalytic Proton acceptor.

This sequence belongs to the RNase Z family. Homodimer. It depends on Zn(2+) as a cofactor.

The catalysed reaction is Endonucleolytic cleavage of RNA, removing extra 3' nucleotides from tRNA precursor, generating 3' termini of tRNAs. A 3'-hydroxy group is left at the tRNA terminus and a 5'-phosphoryl group is left at the trailer molecule.. In terms of biological role, zinc phosphodiesterase, which displays some tRNA 3'-processing endonuclease activity. Probably involved in tRNA maturation, by removing a 3'-trailer from precursor tRNA. The polypeptide is Ribonuclease Z (Microcystis aeruginosa (strain NIES-843 / IAM M-2473)).